Consider the following 232-residue polypeptide: Lipoprotein-releasing system ATP-binding protein LolD (232 aa).

In terms of domain architecture, ABC transporter spans 6–231 (ISCENLNKVY…KLTIKESQHV (226 aa)). An ATP-binding site is contributed by 42-49 (GSSGSGKS).

The protein belongs to the ABC transporter superfamily. Lipoprotein translocase (TC 3.A.1.125) family. In terms of assembly, the complex is composed of two ATP-binding proteins (LolD) and two transmembrane proteins (LolC and LolE).

Its subcellular location is the cell inner membrane. Part of the ABC transporter complex LolCDE involved in the translocation of mature outer membrane-directed lipoproteins, from the inner membrane to the periplasmic chaperone, LolA. Responsible for the formation of the LolA-lipoprotein complex in an ATP-dependent manner. The protein is Lipoprotein-releasing system ATP-binding protein LolD of Pseudoalteromonas translucida (strain TAC 125).